The following is an 876-amino-acid chain: Monofunctional isopimaradiene synthase, chloroplastic (876 aa).

The transit peptide at 1–64 (MAMPSYSSLS…YLRLGSRKII (64 aa)) directs the protein to the chloroplast. Positions 628, 632, 772, 776, and 780 each coordinate Mg(2+). A DDXXD motif motif is present at residues 628–632 (DDLYD).

This sequence belongs to the terpene synthase family. Tpsd subfamily. It depends on Mg(2+) as a cofactor.

Its subcellular location is the plastid. The protein resides in the chloroplast. It carries out the reaction (+)-copalyl diphosphate = isopimara-7,15-diene + diphosphate. It functions in the pathway terpene metabolism; oleoresin biosynthesis. Its function is as follows. Involved in defensive oleoresin formation in conifers in response to insect attack or other injury. Involved in diterpene (C20) olefins biosynthesis. Monofunctional enzyme lacking the DXDD motif in the class II active site relevant for the cyclization of geranylgeranyl diphosphate (GGPP). Requires (+)-copalyl diphosphate ((+)-CPP) as substrate, but no activity with GGPP or ent-CPP. Isopimaradiene is the major products of the enzyme followed by sandaracopimaradiene. This Pinus banksiana (Jack pine) protein is Monofunctional isopimaradiene synthase, chloroplastic.